A 222-amino-acid polypeptide reads, in one-letter code: Protein-L-isoaspartate O-methyltransferase (222 aa).

Serine 68 is a catalytic residue.

This sequence belongs to the methyltransferase superfamily. L-isoaspartyl/D-aspartyl protein methyltransferase family.

Its subcellular location is the cytoplasm. It catalyses the reaction [protein]-L-isoaspartate + S-adenosyl-L-methionine = [protein]-L-isoaspartate alpha-methyl ester + S-adenosyl-L-homocysteine. Its function is as follows. Catalyzes the methyl esterification of L-isoaspartyl residues in peptides and proteins that result from spontaneous decomposition of normal L-aspartyl and L-asparaginyl residues. It plays a role in the repair and/or degradation of damaged proteins. The protein is Protein-L-isoaspartate O-methyltransferase of Koribacter versatilis (strain Ellin345).